Here is a 268-residue protein sequence, read N- to C-terminus: 5'-nucleotidase SurE (268 aa).

A divalent metal cation-binding residues include Asp-8, Asp-9, Ser-40, and Asn-98.

This sequence belongs to the SurE nucleotidase family. It depends on a divalent metal cation as a cofactor.

The protein localises to the cytoplasm. The catalysed reaction is a ribonucleoside 5'-phosphate + H2O = a ribonucleoside + phosphate. Its function is as follows. Nucleotidase that shows phosphatase activity on nucleoside 5'-monophosphates. This chain is 5'-nucleotidase SurE, found in Trichodesmium erythraeum (strain IMS101).